A 256-amino-acid chain; its full sequence is NH(3)-dependent NAD(+) synthetase (256 aa).

Residue glycine 29–serine 36 coordinates ATP. Aspartate 35 contributes to the Mg(2+) binding site. Arginine 115 contributes to the deamido-NAD(+) binding site. Threonine 135 provides a ligand contact to ATP. Mg(2+) is bound at residue glutamate 140. Deamido-NAD(+) contacts are provided by lysine 148 and aspartate 155. Lysine 164 and serine 186 together coordinate ATP. Position 245-246 (histidine 245–lysine 246) interacts with deamido-NAD(+).

This sequence belongs to the NAD synthetase family. As to quaternary structure, homodimer.

The catalysed reaction is deamido-NAD(+) + NH4(+) + ATP = AMP + diphosphate + NAD(+) + H(+). The protein operates within cofactor biosynthesis; NAD(+) biosynthesis; NAD(+) from deamido-NAD(+) (ammonia route): step 1/1. Functionally, catalyzes the ATP-dependent amidation of deamido-NAD to form NAD. Uses ammonia as a nitrogen source. The protein is NH(3)-dependent NAD(+) synthetase of Methanosarcina acetivorans (strain ATCC 35395 / DSM 2834 / JCM 12185 / C2A).